The primary structure comprises 82 residues: Putative membrane protein insertion efficiency factor (82 aa).

This sequence belongs to the UPF0161 family.

The protein resides in the cell inner membrane. In terms of biological role, could be involved in insertion of integral membrane proteins into the membrane. In Rickettsia peacockii (strain Rustic), this protein is Putative membrane protein insertion efficiency factor.